Reading from the N-terminus, the 440-residue chain is Putative purine permease YwdJ (440 aa).

13 helical membrane passes run 3-23, 39-59, 67-87, 96-116, 130-150, 156-176, 188-208, 231-251, 283-303, 314-334, 341-361, 374-394, and 399-419; these read LVLG…VVPV, LIQS…LKGH, PAGL…TVFA, LQGA…FKVI, VYLL…ILGI, GVDG…FIMT, ILLA…AKPI, GLII…LASM, LLSG…AGFI, FMLG…MNTF, VGFA…FAEF, SIIG…ETAL, and PVFI…AIAA.

This sequence belongs to the nucleobase:cation symporter-2 (NCS2) (TC 2.A.40) family.

It localises to the cell membrane. In Bacillus subtilis (strain 168), this protein is Putative purine permease YwdJ (ywdJ).